The sequence spans 306 residues: Agmatinase (306 aa).

Residues histidine 126, aspartate 149, histidine 151, aspartate 153, aspartate 230, and aspartate 232 each coordinate Mn(2+).

Belongs to the arginase family. Agmatinase subfamily. It depends on Mn(2+) as a cofactor.

The enzyme catalyses agmatine + H2O = urea + putrescine. The protein operates within amine and polyamine biosynthesis; putrescine biosynthesis via agmatine pathway; putrescine from agmatine: step 1/1. Its function is as follows. Catalyzes the formation of putrescine from agmatine. This is Agmatinase from Serratia proteamaculans (strain 568).